The following is a 215-amino-acid chain: N-(5'-phosphoribosyl)anthranilate isomerase (215 aa).

This sequence belongs to the TrpF family.

The catalysed reaction is N-(5-phospho-beta-D-ribosyl)anthranilate = 1-(2-carboxyphenylamino)-1-deoxy-D-ribulose 5-phosphate. It participates in amino-acid biosynthesis; L-tryptophan biosynthesis; L-tryptophan from chorismate: step 3/5. This chain is N-(5'-phosphoribosyl)anthranilate isomerase, found in Parvibaculum lavamentivorans (strain DS-1 / DSM 13023 / NCIMB 13966).